The primary structure comprises 205 residues: RNA pyrophosphohydrolase (205 aa).

In terms of domain architecture, Nudix hydrolase spans 6–149 (GFRPNVGIVL…KRGVYARALR (144 aa)). Positions 38–59 (GGMNTDETPVEAMYRELREETG) match the Nudix box motif. The tract at residues 177–205 (PGSSAAGHDSPRKRPRKRSGARPMRINND) is disordered. The segment covering 187–196 (PRKRPRKRSG) has biased composition (basic residues).

It belongs to the Nudix hydrolase family. RppH subfamily. A divalent metal cation is required as a cofactor.

In terms of biological role, accelerates the degradation of transcripts by removing pyrophosphate from the 5'-end of triphosphorylated RNA, leading to a more labile monophosphorylated state that can stimulate subsequent ribonuclease cleavage. The sequence is that of RNA pyrophosphohydrolase from Xanthomonas oryzae pv. oryzae (strain MAFF 311018).